The primary structure comprises 833 residues: AdoMet-dependent rRNA methyltransferase SPB1 (833 aa).

Residues glycine 59, tryptophan 61, aspartate 79, aspartate 95, and aspartate 120 each contribute to the S-adenosyl-L-methionine site. The Proton acceptor role is filled by lysine 160. 2 coiled-coil regions span residues 348-389 (EEEQ…QLNM) and 453-481 (RDELAEADELESQLDAMYSNYKERKSERD). Residues 477-493 (KSERDAKFRAKQARESS) are compositionally biased toward basic and acidic residues. Disordered stretches follow at residues 477–532 (KSER…SDDD), 592–645 (KRKL…EKHS), and 776–810 (VTKKAKQKPKVTVVVASGKNRGLSGRPKGVKGKYK). Composition is skewed to acidic residues over residues 505 to 532 (QSDEENEEETKDYVDDDDNSDLSDSDDD) and 622 to 634 (EDGDVDSEYDSEE). A compositionally biased stretch (basic and acidic residues) spans 635–645 (EAKRTKQEKHS). Residues 730–782 (AEAKARKKHRAVARLEKLKKKAGLINDDSDKSEKDKAEEIAKLMRKVTKKAKQ) adopt a coiled-coil conformation.

The protein belongs to the class I-like SAM-binding methyltransferase superfamily. RNA methyltransferase RlmE family. SPB1 subfamily. As to quaternary structure, component of the nucleolar and nucleoplasmic pre-60S ribosomal particle.

It is found in the nucleus. The protein localises to the nucleolus. The catalysed reaction is a ribonucleotide in rRNA + S-adenosyl-L-methionine = a 2'-O-methylribonucleotide in rRNA + S-adenosyl-L-homocysteine + H(+). Its function is as follows. Required for proper assembly of pre-ribosomal particles during the biogenesis of the 60S ribosomal subunit. This is AdoMet-dependent rRNA methyltransferase SPB1 from Kluyveromyces lactis (strain ATCC 8585 / CBS 2359 / DSM 70799 / NBRC 1267 / NRRL Y-1140 / WM37) (Yeast).